Consider the following 106-residue polypeptide: Putative double-stranded DNA mimic protein VIBHAR_02752 (106 aa).

The protein belongs to the putative dsDNA mimic protein family.

Functionally, may act as a double-stranded DNA (dsDNA) mimic. Probably regulates the activity of a dsDNA-binding protein. The sequence is that of Putative double-stranded DNA mimic protein VIBHAR_02752 from Vibrio campbellii (strain ATCC BAA-1116).